A 382-amino-acid polypeptide reads, in one-letter code: Dual-specificity RNA methyltransferase RlmN (382 aa).

Glu-94 functions as the Proton acceptor in the catalytic mechanism. The Radical SAM core domain occupies Glu-100 to Asp-336. Cys-107 and Cys-342 are disulfide-bonded. Positions 114, 118, and 121 each coordinate [4Fe-4S] cluster. S-adenosyl-L-methionine-binding positions include Gly-168–Glu-169, Ser-200, Ser-222–His-224, and Asn-299. The S-methylcysteine intermediate role is filled by Cys-342.

The protein belongs to the radical SAM superfamily. RlmN family. The cofactor is [4Fe-4S] cluster.

Its subcellular location is the cytoplasm. The enzyme catalyses adenosine(2503) in 23S rRNA + 2 reduced [2Fe-2S]-[ferredoxin] + 2 S-adenosyl-L-methionine = 2-methyladenosine(2503) in 23S rRNA + 5'-deoxyadenosine + L-methionine + 2 oxidized [2Fe-2S]-[ferredoxin] + S-adenosyl-L-homocysteine. The catalysed reaction is adenosine(37) in tRNA + 2 reduced [2Fe-2S]-[ferredoxin] + 2 S-adenosyl-L-methionine = 2-methyladenosine(37) in tRNA + 5'-deoxyadenosine + L-methionine + 2 oxidized [2Fe-2S]-[ferredoxin] + S-adenosyl-L-homocysteine. In terms of biological role, specifically methylates position 2 of adenine 2503 in 23S rRNA and position 2 of adenine 37 in tRNAs. m2A2503 modification seems to play a crucial role in the proofreading step occurring at the peptidyl transferase center and thus would serve to optimize ribosomal fidelity. This Legionella pneumophila (strain Lens) protein is Dual-specificity RNA methyltransferase RlmN.